The chain runs to 241 residues: Probable transcriptional regulatory protein lmo1535 (241 aa).

Residues 1–14 (MSGHSKWNNIQGRK) are compositionally biased toward polar residues. Positions 1–22 (MSGHSKWNNIQGRKNAQDSKRS) are disordered.

This sequence belongs to the TACO1 family.

The protein localises to the cytoplasm. The chain is Probable transcriptional regulatory protein lmo1535 from Listeria monocytogenes serovar 1/2a (strain ATCC BAA-679 / EGD-e).